The sequence spans 472 residues: Argininosuccinate lyase (472 aa).

The protein belongs to the lyase 1 family. Argininosuccinate lyase subfamily.

The protein localises to the cytoplasm. It catalyses the reaction 2-(N(omega)-L-arginino)succinate = fumarate + L-arginine. Its pathway is amino-acid biosynthesis; L-arginine biosynthesis; L-arginine from L-ornithine and carbamoyl phosphate: step 3/3. The sequence is that of Argininosuccinate lyase from Rhodococcus jostii (strain RHA1).